We begin with the raw amino-acid sequence, 263 residues long: Flagellar L-ring protein (263 aa).

An N-terminal signal peptide occupies residues 1-15; that stretch reads MKRLLCLLLLTTLTG. C16 is lipidated: N-palmitoyl cysteine. C16 carries the S-diacylglycerol cysteine lipid modification. The disordered stretch occupies residues 123–143; the sequence is KSADAELSKSNDSSMDPLQVG.

This sequence belongs to the FlgH family. The basal body constitutes a major portion of the flagellar organelle and consists of four rings (L,P,S, and M) mounted on a central rod.

It localises to the cell outer membrane. The protein resides in the bacterial flagellum basal body. Its function is as follows. Assembles around the rod to form the L-ring and probably protects the motor/basal body from shearing forces during rotation. The polypeptide is Flagellar L-ring protein (Aliivibrio fischeri (strain ATCC 700601 / ES114) (Vibrio fischeri)).